Reading from the N-terminus, the 389-residue chain is Succinate--CoA ligase [ADP-forming] subunit beta (389 aa).

The ATP-grasp domain occupies 9–244; sequence KEILRKFGVA…LDEEDPAEVE (236 aa). ATP contacts are provided by residues Lys46, 53–55, Glu99, Ala102, and Glu107; that span reads GRG. Asn199 and Asp213 together coordinate Mg(2+). Residues Asn264 and 321–323 each bind substrate; that span reads GIM.

It belongs to the succinate/malate CoA ligase beta subunit family. In terms of assembly, heterotetramer of two alpha and two beta subunits. Mg(2+) is required as a cofactor.

It catalyses the reaction succinate + ATP + CoA = succinyl-CoA + ADP + phosphate. The catalysed reaction is GTP + succinate + CoA = succinyl-CoA + GDP + phosphate. The protein operates within carbohydrate metabolism; tricarboxylic acid cycle; succinate from succinyl-CoA (ligase route): step 1/1. Functionally, succinyl-CoA synthetase functions in the citric acid cycle (TCA), coupling the hydrolysis of succinyl-CoA to the synthesis of either ATP or GTP and thus represents the only step of substrate-level phosphorylation in the TCA. The beta subunit provides nucleotide specificity of the enzyme and binds the substrate succinate, while the binding sites for coenzyme A and phosphate are found in the alpha subunit. The sequence is that of Succinate--CoA ligase [ADP-forming] subunit beta from Paraburkholderia phytofirmans (strain DSM 17436 / LMG 22146 / PsJN) (Burkholderia phytofirmans).